A 236-amino-acid chain; its full sequence is Nopaline transport system permease protein NocQ (236 aa).

Positions 21-222 constitute an ABC transmembrane type-1 domain; the sequence is AMMTVVVAAC…LLSSVSNRGF (202 aa). Transmembrane regions (helical) follow at residues 25-45, 63-83, 102-122, and 199-219; these read VVVA…FAAA, VVRG…GGTL, IFVI…TEVI, and QPFT…SVSN.

Belongs to the binding-protein-dependent transport system permease family. HisMQ subfamily.

The protein localises to the cell inner membrane. Its function is as follows. Component of the nopaline active transport system probably consisting of four subunits: Q, M, P and T. This system is also capable of transporting octopine provided that catabolic functions are induced with nopaline. This Agrobacterium fabrum (strain C58 / ATCC 33970) (Agrobacterium tumefaciens (strain C58)) protein is Nopaline transport system permease protein NocQ (nocQ).